The chain runs to 176 residues: Crossover junction endodeoxyribonuclease RuvC (176 aa).

Residues Asp-12, Glu-72, and Asp-144 contribute to the active site. Mg(2+) is bound by residues Asp-12, Glu-72, and Asp-144.

Belongs to the RuvC family. In terms of assembly, homodimer which binds Holliday junction (HJ) DNA. The HJ becomes 2-fold symmetrical on binding to RuvC with unstacked arms; it has a different conformation from HJ DNA in complex with RuvA. In the full resolvosome a probable DNA-RuvA(4)-RuvB(12)-RuvC(2) complex forms which resolves the HJ. It depends on Mg(2+) as a cofactor.

Its subcellular location is the cytoplasm. It catalyses the reaction Endonucleolytic cleavage at a junction such as a reciprocal single-stranded crossover between two homologous DNA duplexes (Holliday junction).. Its function is as follows. The RuvA-RuvB-RuvC complex processes Holliday junction (HJ) DNA during genetic recombination and DNA repair. Endonuclease that resolves HJ intermediates. Cleaves cruciform DNA by making single-stranded nicks across the HJ at symmetrical positions within the homologous arms, yielding a 5'-phosphate and a 3'-hydroxyl group; requires a central core of homology in the junction. The consensus cleavage sequence is 5'-(A/T)TT(C/G)-3'. Cleavage occurs on the 3'-side of the TT dinucleotide at the point of strand exchange. HJ branch migration catalyzed by RuvA-RuvB allows RuvC to scan DNA until it finds its consensus sequence, where it cleaves and resolves the cruciform DNA. This is Crossover junction endodeoxyribonuclease RuvC from Methylocella silvestris (strain DSM 15510 / CIP 108128 / LMG 27833 / NCIMB 13906 / BL2).